A 234-amino-acid chain; its full sequence is 1-(5-phosphoribosyl)-5-[(5-phosphoribosylamino)methylideneamino] imidazole-4-carboxamide isomerase (234 aa).

Asp-9 (proton acceptor) is an active-site residue. Asp-131 (proton donor) is an active-site residue.

This sequence belongs to the HisA/HisF family.

The protein resides in the cytoplasm. The catalysed reaction is 1-(5-phospho-beta-D-ribosyl)-5-[(5-phospho-beta-D-ribosylamino)methylideneamino]imidazole-4-carboxamide = 5-[(5-phospho-1-deoxy-D-ribulos-1-ylimino)methylamino]-1-(5-phospho-beta-D-ribosyl)imidazole-4-carboxamide. It functions in the pathway amino-acid biosynthesis; L-histidine biosynthesis; L-histidine from 5-phospho-alpha-D-ribose 1-diphosphate: step 4/9. The chain is 1-(5-phosphoribosyl)-5-[(5-phosphoribosylamino)methylideneamino] imidazole-4-carboxamide isomerase from Staphylococcus saprophyticus subsp. saprophyticus (strain ATCC 15305 / DSM 20229 / NCIMB 8711 / NCTC 7292 / S-41).